Consider the following 637-residue polypeptide: MITITLPDSSTKTFDGPVTGEQIAKSISEGLWRECVAVEVDGAAMDLSEPIATDAAVRLITTRDPEGLHIMRHSAAHVMAEAVQRVFPDAELTIGPVVEDGFYYDIDMEPVSEEIFSRVEAEIKKIVSAKIPFVRKEVDKAEALDRYRDQPYKTEILNEIEDDTVSLYTNGDFTDLCRGPHVPHTGFVRAVKLTKISGAYWRGDQNREQLQRLYGTAFFSKKELDAYLTLIEEAKKRDHRKLGAELDLFSFHEEAAGMPFFHPNGMKLWNALLDYWRLEHRAAGYVEVKTPVMLDRALWEKSGHWENYRENMYVSVIDDNQYAIKPMNCPGGMLLYKEKRYSYRDLPLRVAEIGLVHRHELSGVLSGLFRVRAFHQDDAHIFMTPDQIEQEIFGVLKLVETIYSTFGLGFHLELSTRPAKSIGTDEQWVKATAGLRAALDAYGKGYAVNEGDGAFYGPKIDVHIKDALGRTWQCGTIQLDMSLPERFDLSYIDAGSEKQRPVMIHRVIYGSIERFLGILIEHFAGKFPLWLAPTQAVLLPLNDDMIPYAREVRQEFEQAGIRTEIDDRSESLNKKVRQAQIDKIPLIITLGGKEKEARTLSVRTLDGQVRHGVSHEAFFAVAKEHIAKRLQTPVVFA.

The 61-residue stretch at Met1–Thr61 folds into the TGS domain. The tract at residues Asp238–Pro528 is catalytic. Cys329, His380, and His505 together coordinate Zn(2+).

The protein belongs to the class-II aminoacyl-tRNA synthetase family. In terms of assembly, homodimer. Zn(2+) is required as a cofactor.

The protein resides in the cytoplasm. It carries out the reaction tRNA(Thr) + L-threonine + ATP = L-threonyl-tRNA(Thr) + AMP + diphosphate + H(+). Functionally, catalyzes the attachment of threonine to tRNA(Thr) in a two-step reaction: L-threonine is first activated by ATP to form Thr-AMP and then transferred to the acceptor end of tRNA(Thr). Also edits incorrectly charged L-seryl-tRNA(Thr). In Desulfosudis oleivorans (strain DSM 6200 / JCM 39069 / Hxd3) (Desulfococcus oleovorans), this protein is Threonine--tRNA ligase.